A 107-amino-acid chain; its full sequence is MIYTTTETIPGRDIIEIVGVVTGNVVQSKHIGRDIMAGLKSIVGGEIRGYTEMLSDARDVAINRLVASAAQKGADAIVGIRFTTSAIMDGSSEIMAFGTAVKLGPSR.

Belongs to the UPF0145 family.

This chain is UPF0145 protein Sfri_2095, found in Shewanella frigidimarina (strain NCIMB 400).